A 215-amino-acid chain; its full sequence is Cytochrome b6 (215 aa).

The chain crosses the membrane as a helical span at residues 32–52 (IFYCIGGIVFTSFLIQVASGF). Cysteine 35 contributes to the heme c binding site. 2 residues coordinate heme b: histidine 86 and histidine 100. 3 consecutive transmembrane segments (helical) span residues 90-110 (ASMMVLMLILHMFRVYLTGGF), 116-136 (LTWVTGVILAVLTVSFGVTGY), and 186-206 (LHTFVLPLLTAVFMLMHFLMI). Heme b is bound by residues histidine 187 and histidine 202.

It belongs to the cytochrome b family. PetB subfamily. The 4 large subunits of the cytochrome b6-f complex are cytochrome b6, subunit IV (17 kDa polypeptide, PetD), cytochrome f and the Rieske protein, while the 4 small subunits are PetG, PetL, PetM and PetN. The complex functions as a dimer. Requires heme b as cofactor. Heme c is required as a cofactor.

It is found in the plastid. The protein localises to the chloroplast thylakoid membrane. Its function is as follows. Component of the cytochrome b6-f complex, which mediates electron transfer between photosystem II (PSII) and photosystem I (PSI), cyclic electron flow around PSI, and state transitions. In Gracilaria tenuistipitata var. liui (Red alga), this protein is Cytochrome b6.